Reading from the N-terminus, the 489-residue chain is Lysine--tRNA ligase (489 aa).

Residues E399 and E406 each contribute to the Mg(2+) site.

It belongs to the class-II aminoacyl-tRNA synthetase family. In terms of assembly, homodimer. Mg(2+) serves as cofactor.

It localises to the cytoplasm. The catalysed reaction is tRNA(Lys) + L-lysine + ATP = L-lysyl-tRNA(Lys) + AMP + diphosphate. The sequence is that of Lysine--tRNA ligase (lysS) from Mycoplasma pneumoniae (strain ATCC 29342 / M129 / Subtype 1) (Mycoplasmoides pneumoniae).